The chain runs to 982 residues: E3 ubiquitin-protein ligase CBL-B (982 aa).

The segment at 35–167 (PPKQAAADRR…KAIFPNGQFQ (133 aa)) is 4H. One can recognise a Cbl-PTB domain in the interval 35–343 (PPKQAAADRR…GRSYNPDLTG (309 aa)). Residues 168 to 240 (GDNFRITKAD…FEFDIFTRLF (73 aa)) form an EF-hand-like region. The Ca(2+) site is built by aspartate 221, threonine 223, asparagine 225, tyrosine 227, and glutamate 232. An SH2-like region spans residues 241-343 (QPWGSILRNW…GRSYNPDLTG (103 aa)). Serine 282 carries the phosphoserine; by PKC/PRKCQ modification. Position 286 (arginine 286) interacts with 4-O-phospho-L-tyrosine. The interval 344–372 (LCEPTPHDHIKVTQEQYELYCEMGSTFQL) is linker. The residue at position 363 (tyrosine 363) is a Phosphotyrosine. An RING-type zinc finger spans residues 373–412 (CKICAENDKDVKIEPCGHLMCTSCLTAWQESDGQGCPFCR). Residues 466–571 (NVRKCTDRQN…PPPIPPDNRL (106 aa)) are disordered. Over residues 473-486 (RQNSPVTSPGSSPL) the composition is skewed to polar residues. Phosphoserine occurs at positions 476, 480, 484, 521, 525, and 529. Residues 543–568 (PLPAPPPPLRDPPPPPPERPPPIPPD) are interaction with VAV1. A compositionally biased stretch (pro residues) spans 544–567 (LPAPPPPLRDPPPPPPERPPPIPP). Serine 634 carries the post-translational modification Phosphoserine. Phosphotyrosine is present on residues tyrosine 665 and tyrosine 709. 2 disordered regions span residues 688 to 731 (GPLA…NVKP) and 769 to 929 (FDSA…EAAL). Positions 715–725 (HPVSLNSQPSH) are enriched in polar residues. Pro residues predominate over residues 819-828 (PSLPPPPPPA). Residues 838–848 (PPGSSSRPSSG) show a composition bias toward low complexity. Positions 880–899 (VKTNRTSQDYDQLPSCSDGS) are enriched in polar residues. Tyrosine 889 carries the phosphotyrosine modification. The interaction with SH3KBP1 stretch occupies residues 891–927 (QLPSCSDGSQAPARPPKPRPRRTAPEIHHRKPHGPEA). Residues 906–922 (PKPRPRRTAPEIHHRKP) show a composition bias toward basic residues. The UBA domain maps to 931–970 (NVDAKIAKLMGEGYAFEEVKRALEIAQNNVEVARSILREF).

In terms of assembly, interacts with SH3 domain-containing proteins LCK, CRK and SORBS1. Interacts with LCP2 and ZAP70. Interacts with CBL. Interacts with SH3 domain-containing proteins VAV1, FYN, FGR, PLCG1, GRB2, CRKL, PIK3R1 and SH3KBP1/CIN85. Identified in heterotrimeric complexes with SH3KBP1/CIN85, CD2AP and ARHGEF7, where one CBLB peptide binds two copies of the other protein. Interacts with poly-ubiquitinated proteins. Dimerization is required for the binding of poly-ubiquitin, but not for the binding of mono-ubiquitin. Interacts with EGFR (phosphorylated). Interacts with IFT20. Post-translationally, phosphorylated on tyrosine and serine residues upon TCR or BCR activation, and upon various types of cell stimulation. In terms of processing, auto-ubiquitinated upon EGF-mediated cell activation or upon T-cell costimulation by CD28; which promotes proteasomal degradation. As to expression, expressed in placenta, heart, lung, kidney, spleen, ovary and testis, as well as fetal brain and liver and hematopoietic cell lines, but not in adult brain, liver, pancreas, salivary gland, or skeletal muscle. Present in lymphocytes (at protein level).

The protein localises to the cytoplasm. The catalysed reaction is S-ubiquitinyl-[E2 ubiquitin-conjugating enzyme]-L-cysteine + [acceptor protein]-L-lysine = [E2 ubiquitin-conjugating enzyme]-L-cysteine + N(6)-ubiquitinyl-[acceptor protein]-L-lysine.. It functions in the pathway protein modification; protein ubiquitination. E3 ubiquitin-protein ligase which accepts ubiquitin from specific E2 ubiquitin-conjugating enzymes, and transfers it to substrates, generally promoting their degradation by the proteasome. Negatively regulates TCR (T-cell receptor), BCR (B-cell receptor) and FCER1 (high affinity immunoglobulin epsilon receptor) signal transduction pathways. In naive T-cells, inhibits VAV1 activation upon TCR engagement and imposes a requirement for CD28 costimulation for proliferation and IL-2 production. Also acts by promoting PIK3R1/p85 ubiquitination, which impairs its recruitment to the TCR and subsequent activation. In activated T-cells, inhibits PLCG1 activation and calcium mobilization upon restimulation and promotes anergy. In B-cells, acts by ubiquitinating SYK and promoting its proteasomal degradation. Slightly promotes SRC ubiquitination. May be involved in EGFR ubiquitination and internalization. May be functionally coupled with the E2 ubiquitin-protein ligase UB2D3. In association with CBL, required for proper feedback inhibition of ciliary platelet-derived growth factor receptor-alpha (PDGFRA) signaling pathway via ubiquitination and internalization of PDGFRA. This Homo sapiens (Human) protein is E3 ubiquitin-protein ligase CBL-B (CBLB).